We begin with the raw amino-acid sequence, 470 residues long: MQNPYGHFTNNTTEDREASSQGGPFGQSLNRPLDYAGSFPSLTYNNNNFIANQQPSLPLPEPRLSWNNVNQVSNPLMVTPLPGLQKRMNKNIKKKLPRVSKKASALSNGVSGNVMSNSNIVGHGAVGSASGWKVEMGGSDELERRKRRAERFSQGPSATTNSNDNLNEDFANLNAISSKSHQYDKKIHVVGRCQTLEKSYLRLTSEPNPDLIRPPNILQKMYCLLMDKYQSKTATYTYLCDQFKSMRQDLRVQMIENSFTIKVYQTHARIALENGDLGEFNQCQNRIMALFENPTIPKKSYSEFICYSVLYSMLTEDYPSISHLKLKLIDDGSSEILEDEHVKMIFELSDMKLVGNYHYFMKNYLKLHKFEKCLINSFLNLEKLIFLTIICKSYNQVNLDFVKSEFNFNSIEETTNFLNEQNLTEFILNKQITDSNGKSSNIKILNTKGCRVQLIQNYMKSKKIDIKGQK.

Met1 is subject to N-acetylmethionine. 3 stretches are compositionally biased toward polar residues: residues 1–12 (MQNPYGHFTNNT), 19–30 (SSQGGPFGQSLN), and 154–165 (QGPSATTNSNDN). Disordered stretches follow at residues 1-31 (MQNP…SLNR) and 137-167 (GGSD…DNLN). Residues 276-450 (DLGEFNQCQN…NIKILNTKGC (175 aa)) form the PCI domain.

It belongs to the THP3 family. As to quaternary structure, interacts with CSN12 and SEM1.

Its subcellular location is the nucleus. Functionally, forms a complex with CSN12 that is recruited to transcribed genes and required for transcription elongation. May also be involved in pre-mRNA splicing. In Saccharomyces cerevisiae (strain ATCC 204508 / S288c) (Baker's yeast), this protein is Protein THP3 (THP3).